The following is a 165-amino-acid chain: Endoribonuclease YbeY (165 aa).

Positions 126, 130, and 136 each coordinate Zn(2+).

This sequence belongs to the endoribonuclease YbeY family. Zn(2+) serves as cofactor.

Its subcellular location is the cytoplasm. Functionally, single strand-specific metallo-endoribonuclease involved in late-stage 70S ribosome quality control and in maturation of the 3' terminus of the 16S rRNA. This chain is Endoribonuclease YbeY, found in Ruegeria pomeroyi (strain ATCC 700808 / DSM 15171 / DSS-3) (Silicibacter pomeroyi).